The sequence spans 949 residues: Copper-transporting ATPase PAA1, chloroplastic (949 aa).

Residues 1-103 (MESTLSAFST…SSSPSFRSIS (103 aa)) constitute a chloroplast transit peptide. Positions 113–126 (YNGGSGGGGGGGSE) are enriched in gly residues. Positions 113-142 (YNGGSGGGGGGGSESGDSKSKLGANASDGV) are disordered. The HMA domain maps to 148–222 (DIIILDVGGM…HLTNCGFQST (75 aa)). 2 residues coordinate Cu(+): Cys159 and Cys162. The next 6 helical transmembrane spans lie at 253-274 (LAVS…FLGV), 287-306 (FHVS…LVLD), 314-334 (GSPN…SVSS), 349-369 (EEPV…QRAK), 502-524 (VAGR…WNLF), and 543-560 (LQLS…ALGL). Asp598 functions as the 4-aspartylphosphate intermediate in the catalytic mechanism. An ATP-binding site is contributed by 807-814 (GDGINDAA). Residues Asp808 and Asp812 each coordinate Mg(2+). A run of 2 helical transmembrane segments spans residues 863–882 (KQNL…IAAG) and 895–913 (SMAG…TNSL). Positions 925–949 (DKNVKPEPKEGTKQPHENTRWKQSS) are disordered.

This sequence belongs to the cation transport ATPase (P-type) (TC 3.A.3) family. Type IB subfamily. In terms of tissue distribution, expressed in the shoots and roots.

Its subcellular location is the plastid. The protein resides in the chloroplast membrane. The enzyme catalyses Cu(+)(in) + ATP + H2O = Cu(+)(out) + ADP + phosphate + H(+). Mediates copper transfer across the plastid envelope. Required for the delivery of copper into the plastid stroma, which is essential for the function of copper proteins. Seems to be selective for monovalent copper Cu(+) transport. Also plays a role in glucose signaling-mediated cell proliferation of root meristem in non-green tissues. This chain is Copper-transporting ATPase PAA1, chloroplastic (PAA1), found in Arabidopsis thaliana (Mouse-ear cress).